A 149-amino-acid polypeptide reads, in one-letter code: Deoxyuridine 5'-triphosphate nucleotidohydrolase (149 aa).

Substrate is bound by residues 68 to 70 (RSG), Asn81, 85 to 87 (TVD), and Lys95.

This sequence belongs to the dUTPase family. Mg(2+) is required as a cofactor.

It catalyses the reaction dUTP + H2O = dUMP + diphosphate + H(+). The protein operates within pyrimidine metabolism; dUMP biosynthesis; dUMP from dCTP (dUTP route): step 2/2. In terms of biological role, this enzyme is involved in nucleotide metabolism: it produces dUMP, the immediate precursor of thymidine nucleotides and it decreases the intracellular concentration of dUTP so that uracil cannot be incorporated into DNA. In Wolinella succinogenes (strain ATCC 29543 / DSM 1740 / CCUG 13145 / JCM 31913 / LMG 7466 / NCTC 11488 / FDC 602W) (Vibrio succinogenes), this protein is Deoxyuridine 5'-triphosphate nucleotidohydrolase.